A 384-amino-acid chain; its full sequence is Lipoprotein LprN (384 aa).

The signal sequence occupies residues 1–20; sequence MNRIWLRAIILTASSALLAG. C21 carries N-palmitoyl cysteine lipidation. The S-diacylglycerol cysteine moiety is linked to residue C21.

Lipidated upon expression in E.coli.

Its subcellular location is the cell membrane. Its function is as follows. Stimulates the host (mouse) immune response; lipidated protein produced in E.coli stimulates T-cell proliferation in mice previously sensitized with LprN. Spleenocytes from these mice produce increased amounts of TNF-alpha and IFN-gamma, as well as somewhat increased nitric oxide levels, upon subsequent challenge with LprN. Previously sensitized mice infected with M.tuberculosis have an exacerbated disease response, suggesting this lipoprotein may down-regulate the host's immune response. The polypeptide is Lipoprotein LprN (lprN) (Mycobacterium tuberculosis (strain ATCC 25618 / H37Rv)).